Here is a 689-residue protein sequence, read N- to C-terminus: Elongation factor G (689 aa).

The tr-type G domain maps to 8 to 282 (ERTRNIGIMA…GVVAYMPSPL (275 aa)). GTP is bound by residues 17–24 (AHIDAGKT), 81–85 (DTPGH), and 135–138 (NKMD).

It belongs to the TRAFAC class translation factor GTPase superfamily. Classic translation factor GTPase family. EF-G/EF-2 subfamily.

The protein localises to the cytoplasm. Functionally, catalyzes the GTP-dependent ribosomal translocation step during translation elongation. During this step, the ribosome changes from the pre-translocational (PRE) to the post-translocational (POST) state as the newly formed A-site-bound peptidyl-tRNA and P-site-bound deacylated tRNA move to the P and E sites, respectively. Catalyzes the coordinated movement of the two tRNA molecules, the mRNA and conformational changes in the ribosome. The protein is Elongation factor G of Alkaliphilus metalliredigens (strain QYMF).